The following is a 156-amino-acid chain: ATP synthase subunit b (156 aa).

A helical transmembrane segment spans residues 11–31 (AIAFILFVWFCMKYVWPPLMA).

It belongs to the ATPase B chain family. In terms of assembly, F-type ATPases have 2 components, F(1) - the catalytic core - and F(0) - the membrane proton channel. F(1) has five subunits: alpha(3), beta(3), gamma(1), delta(1), epsilon(1). F(0) has three main subunits: a(1), b(2) and c(10-14). The alpha and beta chains form an alternating ring which encloses part of the gamma chain. F(1) is attached to F(0) by a central stalk formed by the gamma and epsilon chains, while a peripheral stalk is formed by the delta and b chains.

The protein resides in the cell inner membrane. Functionally, f(1)F(0) ATP synthase produces ATP from ADP in the presence of a proton or sodium gradient. F-type ATPases consist of two structural domains, F(1) containing the extramembraneous catalytic core and F(0) containing the membrane proton channel, linked together by a central stalk and a peripheral stalk. During catalysis, ATP synthesis in the catalytic domain of F(1) is coupled via a rotary mechanism of the central stalk subunits to proton translocation. In terms of biological role, component of the F(0) channel, it forms part of the peripheral stalk, linking F(1) to F(0). In Salmonella gallinarum (strain 287/91 / NCTC 13346), this protein is ATP synthase subunit b.